The chain runs to 181 residues: Early E3 20.3 kDa glycoprotein (181 aa).

N-linked (GlcNAc...) asparagine; by host glycosylation is found at Asn-29, Asn-57, Asn-70, and Asn-75.

Belongs to the adenoviridae E3_20 family.

Its function is as follows. E3 proteins seem to be dispensable for virus growth in tissue culture cells. They are potentially important for virus growth under special conditions; E3 region may help adenoviruses to evade the immune surveillance of the host. This is Early E3 20.3 kDa glycoprotein from Homo sapiens (Human).